Consider the following 308-residue polypeptide: Cell division protein FtsQ (308 aa).

Topologically, residues 1–53 (MDSGGRIVYALNVEKTGFLRILSVTVLQRLYRRVFWFLFKCVAGIDVPRHAGS) are cytoplasmic. Residues 54 to 74 (LAVFSFFFLSILYSISSGGYM) traverse the membrane as a helical segment. Residues 75-308 (NHFMKVAISN…LLKMLKAGSV (234 aa)) are Periplasmic-facing. The 69-residue stretch at 87-155 (FLVTHVDMSG…DRLRISLVER (69 aa)) folds into the POTRA domain.

It belongs to the FtsQ/DivIB family. FtsQ subfamily.

It is found in the cell inner membrane. Functionally, essential cell division protein. This Bartonella bacilliformis protein is Cell division protein FtsQ.